An 81-amino-acid chain; its full sequence is Trefoil factor 1 (81 aa).

A signal peptide spans 1–23 (MEHRVIYVLVLVCALTLSSLAQG). Positions 26–69 (ETCTVAPHHRDNCGSPGITPSQCKDKGCCFDNTVRGVPWCYYPV) constitute a P-type domain. Cystine bridges form between Cys28–Cys54, Cys38–Cys53, and Cys48–Cys65.

The protein localises to the secreted. In terms of biological role, stabilizer of the mucous gel overlying the gastrointestinal mucosa that provides a physical barrier against various noxious agents. In Canis lupus familiaris (Dog), this protein is Trefoil factor 1 (TFF1).